The primary structure comprises 100 residues: Aspartyl/glutamyl-tRNA(Asn/Gln) amidotransferase subunit C (100 aa).

The protein belongs to the GatC family. In terms of assembly, heterotrimer of A, B and C subunits.

The catalysed reaction is L-glutamyl-tRNA(Gln) + L-glutamine + ATP + H2O = L-glutaminyl-tRNA(Gln) + L-glutamate + ADP + phosphate + H(+). It carries out the reaction L-aspartyl-tRNA(Asn) + L-glutamine + ATP + H2O = L-asparaginyl-tRNA(Asn) + L-glutamate + ADP + phosphate + 2 H(+). Its function is as follows. Allows the formation of correctly charged Asn-tRNA(Asn) or Gln-tRNA(Gln) through the transamidation of misacylated Asp-tRNA(Asn) or Glu-tRNA(Gln) in organisms which lack either or both of asparaginyl-tRNA or glutaminyl-tRNA synthetases. The reaction takes place in the presence of glutamine and ATP through an activated phospho-Asp-tRNA(Asn) or phospho-Glu-tRNA(Gln). This chain is Aspartyl/glutamyl-tRNA(Asn/Gln) amidotransferase subunit C, found in Streptococcus agalactiae serotype Ia (strain ATCC 27591 / A909 / CDC SS700).